The following is a 586-amino-acid chain: Methionine--tRNA ligase, mitochondrial (586 aa).

A mitochondrion-targeting transit peptide spans 1–46 (MLRQCARWVLTRTRFGRGCRRYGSCSPSASGDAGEARAYFTTPIFY). Positions 45 to 55 (FYVNAAPHIGH) match the 'HIGH' region motif. The 'KMSKS' region motif lies at 340 to 344 (KMSKS). K343 is a binding site for ATP.

Belongs to the class-I aminoacyl-tRNA synthetase family.

Its subcellular location is the mitochondrion matrix. It carries out the reaction tRNA(Met) + L-methionine + ATP = L-methionyl-tRNA(Met) + AMP + diphosphate. The chain is Methionine--tRNA ligase, mitochondrial (Mars2) from Mus musculus (Mouse).